The following is a 296-amino-acid chain: Acetyl-coenzyme A carboxylase carboxyl transferase subunit beta (296 aa).

The CoA carboxyltransferase N-terminal domain maps to 25 to 294 (VWTKCTACEQ…PFVEPELISE (270 aa)). Positions 29, 32, 48, and 51 each coordinate Zn(2+). The segment at 29–51 (CTACEQVLYSEELKRNLYVCPKC) adopts a C4-type zinc-finger fold.

The protein belongs to the AccD/PCCB family. As to quaternary structure, acetyl-CoA carboxylase is a heterohexamer composed of biotin carboxyl carrier protein (AccB), biotin carboxylase (AccC) and two subunits each of ACCase subunit alpha (AccA) and ACCase subunit beta (AccD). Zn(2+) serves as cofactor.

The protein localises to the cytoplasm. It catalyses the reaction N(6)-carboxybiotinyl-L-lysyl-[protein] + acetyl-CoA = N(6)-biotinyl-L-lysyl-[protein] + malonyl-CoA. It functions in the pathway lipid metabolism; malonyl-CoA biosynthesis; malonyl-CoA from acetyl-CoA: step 1/1. Its function is as follows. Component of the acetyl coenzyme A carboxylase (ACC) complex. Biotin carboxylase (BC) catalyzes the carboxylation of biotin on its carrier protein (BCCP) and then the CO(2) group is transferred by the transcarboxylase to acetyl-CoA to form malonyl-CoA. This Haemophilus influenzae (strain 86-028NP) protein is Acetyl-coenzyme A carboxylase carboxyl transferase subunit beta.